A 244-amino-acid polypeptide reads, in one-letter code: tRNA (guanine-N(7)-)-methyltransferase (244 aa).

4 residues coordinate S-adenosyl-L-methionine: Glu42, Asp67, Asp94, and Asp116. Residue Asp116 is part of the active site. Substrate-binding positions include Lys120, Asp150, and 191–194 (TYYE).

The protein belongs to the class I-like SAM-binding methyltransferase superfamily. TrmB family.

It carries out the reaction guanosine(46) in tRNA + S-adenosyl-L-methionine = N(7)-methylguanosine(46) in tRNA + S-adenosyl-L-homocysteine. It functions in the pathway tRNA modification; N(7)-methylguanine-tRNA biosynthesis. Its function is as follows. Catalyzes the formation of N(7)-methylguanine at position 46 (m7G46) in tRNA. The polypeptide is tRNA (guanine-N(7)-)-methyltransferase (Porphyromonas gingivalis (strain ATCC BAA-308 / W83)).